The chain runs to 381 residues: Dihydroorotate dehydrogenase (quinone) (381 aa).

FMN is bound by residues Ala74–Lys78 and Thr98. Lys78 is a substrate binding site. Asn123 to Phe127 is a substrate binding site. Residues Asn152 and Asn185 each coordinate FMN. Substrate is bound at residue Asn185. Catalysis depends on Ser188, which acts as the Nucleophile. Asn190 contacts substrate. 2 residues coordinate FMN: Lys223 and Thr251. Asn252–Thr253 is a substrate binding site. Residues Gly289, Gly318, and Tyr339–Thr340 each bind FMN. The disordered stretch occupies residues Arg359 to Ala381.

The protein belongs to the dihydroorotate dehydrogenase family. Type 2 subfamily. As to quaternary structure, monomer. FMN is required as a cofactor.

It localises to the cell membrane. The enzyme catalyses (S)-dihydroorotate + a quinone = orotate + a quinol. It functions in the pathway pyrimidine metabolism; UMP biosynthesis via de novo pathway; orotate from (S)-dihydroorotate (quinone route): step 1/1. In terms of biological role, catalyzes the conversion of dihydroorotate to orotate with quinone as electron acceptor. The protein is Dihydroorotate dehydrogenase (quinone) of Synechococcus sp. (strain JA-2-3B'a(2-13)) (Cyanobacteria bacterium Yellowstone B-Prime).